Reading from the N-terminus, the 405-residue chain is MAKYISNLSRIAVVRGRVSVSTLVKYPRIVLGIETSCDDTGAAVVDENGTILGEALHCQKDIHLKTGGIIPTVAQHLHRDNITKVVNKAIHASGISPYELSAIATTVKPGLGLCLGVGLSYSLDLVNKYHKPFIPIHHMEAHALTVRLLHPVEFPFLVLLISGGHCILAIVSGVSEFVMLGHSLDEAPGDTLDKVARRLSLINHPQCSGMSGGEAIEHLALHGNRKICKLKIPMSHHRDCNFSFAGLRNQVNKVIEQKEAEKGISKGQLLPCVADIAAAVQHTVALHLAQRTQRAIYYCKREGLIPTERACLVVSGGVASNRYIRKALQTVTHESDMTLLCPPPRLCTDNGVMIAWNGIEKLQSGVGVLHNADGACYESRASLGRDISELVRKAAIKVQPIKILS.

The transit peptide at 1 to 19 (MAKYISNLSRIAVVRGRVS) directs the protein to the mitochondrion. A divalent metal cation is bound by residues His138 and His142. Residues 160-164 (LISGG), Asp193, Gly213, Glu217, 320-321 (SN), and Thr348 contribute to the substrate site. Asp349 is an a divalent metal cation binding site.

It belongs to the KAE1 / TsaD family. In terms of assembly, monomer. Requires a divalent metal cation as cofactor.

It is found in the mitochondrion. It carries out the reaction L-threonylcarbamoyladenylate + adenosine(37) in tRNA = N(6)-L-threonylcarbamoyladenosine(37) in tRNA + AMP + H(+). Its function is as follows. Required for the formation of a threonylcarbamoyl group on adenosine at position 37 (t(6)A37) in mitochondrial tRNAs that read codons beginning with adenine. Probably involved in the transfer of the threonylcarbamoyl moiety of threonylcarbamoyl-AMP (TC-AMP) to the N6 group of A37. Involved in mitochondrial genome maintenance. In Xenopus tropicalis (Western clawed frog), this protein is tRNA N6-adenosine threonylcarbamoyltransferase, mitochondrial.